The primary structure comprises 111 residues: Ribonuclease P protein component (111 aa).

It belongs to the RnpA family. Consists of a catalytic RNA component (M1 or rnpB) and a protein subunit.

The enzyme catalyses Endonucleolytic cleavage of RNA, removing 5'-extranucleotides from tRNA precursor.. Functionally, RNaseP catalyzes the removal of the 5'-leader sequence from pre-tRNA to produce the mature 5'-terminus. It can also cleave other RNA substrates such as 4.5S RNA. The protein component plays an auxiliary but essential role in vivo by binding to the 5'-leader sequence and broadening the substrate specificity of the ribozyme. This is Ribonuclease P protein component from Clostridium botulinum (strain Loch Maree / Type A3).